Here is a 347-residue protein sequence, read N- to C-terminus: GMP reductase (347 aa).

Residue 108-131 (ADFQKTKDIMALTDDLIFICIDIA) coordinates NADP(+). K(+)-binding residues include G181 and G183. The Thioimidate intermediate role is filled by C186. Residue 216 to 239 (IIGDGGCSCAGDVSKAFGGGADFV) coordinates NADP(+).

This sequence belongs to the IMPDH/GMPR family. GuaC type 1 subfamily. In terms of assembly, homotetramer.

It carries out the reaction IMP + NH4(+) + NADP(+) = GMP + NADPH + 2 H(+). Its function is as follows. Catalyzes the irreversible NADPH-dependent deamination of GMP to IMP. It functions in the conversion of nucleobase, nucleoside and nucleotide derivatives of G to A nucleotides, and in maintaining the intracellular balance of A and G nucleotides. The sequence is that of GMP reductase from Aliivibrio fischeri (strain ATCC 700601 / ES114) (Vibrio fischeri).